Reading from the N-terminus, the 513-residue chain is Putative ribose/galactose/methyl galactoside import ATP-binding protein 3 (513 aa).

ABC transporter domains follow at residues 15–252 (IELT…VGRQ) and 263–508 (TSAN…TQRE). 47-54 (GENGAGKS) lines the ATP pocket.

Belongs to the ABC transporter superfamily. Carbohydrate importer 2 (CUT2) (TC 3.A.1.2) family.

Its subcellular location is the cell inner membrane. The enzyme catalyses D-ribose(out) + ATP + H2O = D-ribose(in) + ADP + phosphate + H(+). The catalysed reaction is D-galactose(out) + ATP + H2O = D-galactose(in) + ADP + phosphate + H(+). Functionally, part of an ABC transporter complex involved in carbohydrate import. Could be involved in ribose, galactose and/or methyl galactoside import. Responsible for energy coupling to the transport system. In Burkholderia ambifaria (strain ATCC BAA-244 / DSM 16087 / CCUG 44356 / LMG 19182 / AMMD) (Burkholderia cepacia (strain AMMD)), this protein is Putative ribose/galactose/methyl galactoside import ATP-binding protein 3.